An 885-amino-acid polypeptide reads, in one-letter code: Envelope glycoprotein B (885 aa).

The N-terminal stretch at 1-34 (MRPRGTPPSFLPLPVLLALAVIAAAGRAAPAAAA) is a signal peptide. Over residues 29–46 (APAAAAAPTADPAATPAL) the composition is skewed to low complexity. Residues 29–74 (APAAAAAPTADPAATPALPEDEEVPDEDGEGVATPAPAANASVEAG) are disordered. Over 35–759 (APTADPAATP…SGVSSFLSNP (725 aa)) the chain is Virion surface. A compositionally biased stretch (acidic residues) spans 47–58 (PEDEEVPDEDGE). Residues asparagine 68 and asparagine 122 are each glycosylated (N-linked (GlcNAc...) asparagine; by host). 5 cysteine pairs are disulfide-bonded: cysteine 97–cysteine 558, cysteine 114–cysteine 514, cysteine 188–cysteine 252, cysteine 345–cysteine 393, and cysteine 581–cysteine 618. Involved in fusion and/or binding to host membrane regions lie at residues 154 to 160 (VWFGHRY) and 239 to 246 (RVEAFHRY). N-linked (GlcNAc...) asparagine; by host glycans are attached at residues asparagine 379 and asparagine 411. The disordered stretch occupies residues 455 to 478 (RRPAGGDPGEAATPGPSVDPPSVE). Asparagine 659 carries an N-linked (GlcNAc...) asparagine; by host glycan. 2 hydrophobic membrane proximal region regions span residues 704–757 (IDTV…SFLS) and 716–756 (LFAG…SSFL). A helical membrane pass occupies residues 760–780 (FGALAVGLLVLAGLAAAFFAF). The Intravirion segment spans residues 781–885 (RYVMRLQRNP…PLRDTDEEEL (105 aa)). The Golgi targeting motif lies at 834–837 (YMAL). The disordered stretch occupies residues 866–885 (MRKRARPRYSPLRDTDEEEL). The Internalization motif motif lies at 874 to 877 (YSPL).

This sequence belongs to the herpesviridae glycoprotein B family. In terms of assembly, homotrimer; disulfide-linked. Binds to heparan sulfate proteoglycans. Interacts with gH/gL heterodimer.

It is found in the virion membrane. The protein resides in the host cell membrane. The protein localises to the host endosome membrane. It localises to the host Golgi apparatus membrane. Functionally, envelope glycoprotein that forms spikes at the surface of virion envelope. Essential for the initial attachment to heparan sulfate moieties of the host cell surface proteoglycans. Involved in fusion of viral and cellular membranes leading to virus entry into the host cell. Following initial binding to its host receptors, membrane fusion is mediated by the fusion machinery composed at least of gB and the heterodimer gH/gL. May be involved in the fusion between the virion envelope and the outer nuclear membrane during virion egress. The protein is Envelope glycoprotein B of Herpes simplex virus type 2 (strain SA8) (Simian agent 8).